Consider the following 508-residue polypeptide: MLO-like protein 3 (508 aa).

The Extracellular portion of the chain corresponds to 1–21 (MTDKEESNHSSEVGAVRSLQE). A helical transmembrane segment spans residues 22–42 (TPTWALATVCFFFIAVSICLE). At 43–68 (RLINLLSTRLKKNRKTSLLEAVEKLK) the chain is on the cytoplasmic side. A helical transmembrane segment spans residues 69-89 (SVLMVLGFMSLMLNVTEGEVS). Over 90 to 153 (KICIPIKYAN…SEEGLTQLSY (64 aa)) the chain is Extracellular. A helical transmembrane segment spans residues 154-174 (FFFVLACMHILCNLAILLLGM). At 175–275 (AKMRKWNSWE…IQRSLHEDFK (101 aa)) the chain is on the cytoplasmic side. A helical membrane pass occupies residues 276–296 (TVVGISPLMWLTVVIFMLLDV). At 297–304 (SGWRVYFY) the chain is on the extracellular side. A helical membrane pass occupies residues 305 to 325 (MSFVPLIIVLVIGTKLEMIVA). Topologically, residues 326–357 (KMAVTIKENNSVIRGTPLVESNDTHFWFSNPR) are cytoplasmic. A helical transmembrane segment spans residues 358–378 (FLLSILHYTLFLNTFEMAFIV). The Extracellular segment spans residues 379-401 (WITWQFGINSCYHDNQGIIITRL). The helical transmembrane segment at 402 to 422 (VLAVTVQFLSSYITLPLYAIV) threads the bilayer. At 423-508 (TQMGSSYKRA…EIQIQEKTER (86 aa)) the chain is on the cytoplasmic side. The tract at residues 436-457 (EQLANVLRHWQGMVRDKKKTIQ) is calmodulin-binding. The interval 453 to 492 (KKTIQTPDTDNNSNNNNGDIDSGESPVQTEVASEFRFSGR) is disordered. S494 is modified (phosphoserine).

It belongs to the MLO family.

Its subcellular location is the membrane. Functionally, may be involved in modulation of pathogen defense and leaf cell death. Activity seems to be regulated by Ca(2+)-dependent calmodulin binding and seems not to require heterotrimeric G proteins. The polypeptide is MLO-like protein 3 (MLO3) (Arabidopsis thaliana (Mouse-ear cress)).